The sequence spans 591 residues: MDQYEVLEQIGKGAFGSALLVRHKLEKKKYVLKKIRLARQTDRTRRSAHQEMQLIATVRNPFIVEYKDSWVEKGCYVCIVIGYCEGGDMAEAIKRANGTYFSEEKLCKWLVQLLMALDYLHANHILHRDVKCSNIFIARDQSIRLGDFGLAKILTSDDLASSVVGTPSYMCPELLADIPYGTKSDIWSLGCCIYEMTALRPAFKAFDMQALINKITKSIVSPLPTKYSGAFRGLIKSMLRKSPEHRPSAAQLLKHPQLQPYVLQVQLKSSPTRNILPIHQSLTDKVKKMTFPSDVVDSARRRMARRNSLGNERTVTFSKPSPERNSVSSTRSIKEYTTTQSVEGLSVDSSEAGDEVTSKAIITKTSSILRTPKSLPAKTYTARNQLEPPKTSYNRTYRSELPSKTTPNKIARPARRASLPLSTYETPTKRSISILEQLDSPDVSVNAPRIDRIAEFPLASSEDPLLPIHNKLSPGHGSCSTPPFINRSITKDKCTIQVLRTDGDNGSDSSGRNATAASSRGSNDSRQQRFDTSSFQQRAEALEGLLEFSAQLLQQERYEELGILLKPFGPEKASPRETAIWLTKSFKETAS.

The region spanning 4–258 (YEVLEQIGKG…AAQLLKHPQL (255 aa)) is the Protein kinase domain. ATP-binding positions include 10 to 18 (IGKGAFGSA) and lysine 33. The Proton acceptor role is filled by aspartate 129. Disordered stretches follow at residues 309-331 (LGNE…SSTR), 387-408 (EPPK…TTPN), and 500-534 (RTDG…DTSS). Composition is skewed to polar residues over residues 391 to 408 (TSYN…TTPN) and 504 to 534 (DNGS…DTSS).

This sequence belongs to the protein kinase superfamily. NEK Ser/Thr protein kinase family. NIMA subfamily.

The catalysed reaction is L-seryl-[protein] + ATP = O-phospho-L-seryl-[protein] + ADP + H(+). The enzyme catalyses L-threonyl-[protein] + ATP = O-phospho-L-threonyl-[protein] + ADP + H(+). May be involved in plant development processes. This chain is Serine/threonine-protein kinase Nek2 (NEK2), found in Oryza sativa subsp. indica (Rice).